Consider the following 444-residue polypeptide: MSEMTPREIVSELDSYIIGQNKAKRAVAIALRNRWRRMQLNEMLRHEVTPKNILMIGPTGVGKTEIARRLAKLANAPFIKVEATKFTEVGYVGKEVDSIIRDLTDAAIKMVRLQSIDKNRTRAEELAEERILDVLIPPAKNNWGQAEEHQEPSSARQAFRKKLREGQLDDKEIEIDLAAAPMGVEIMAPPGMEEMTNQLQSMFQNLGGQKQKPRKLKIKEAFKLLVEEEAAKLVNPEELKEQAIEAVEQHGIVFIDEIDKICKRGGQSSGPDVSREGVQRDLLPLVEGCTVSTKHGMVKTDHILFIASGAFQTASPSDLIPELQGRLPIRVELQALTTEDFERILTEPSASLTEQYKALMGTEGVNIEFTAEGIRRIAEAAWQVNESTENIGARRLHTVLERLMEDISYDASEINGQSITIDADYVRNHLDELVADEDLSRFIL.

ATP is bound by residues Ile-18, 60–65 (GVGKTE), Asp-256, Glu-322, and Arg-394.

This sequence belongs to the ClpX chaperone family. HslU subfamily. In terms of assembly, a double ring-shaped homohexamer of HslV is capped on each side by a ring-shaped HslU homohexamer. The assembly of the HslU/HslV complex is dependent on binding of ATP.

The protein localises to the cytoplasm. ATPase subunit of a proteasome-like degradation complex; this subunit has chaperone activity. The binding of ATP and its subsequent hydrolysis by HslU are essential for unfolding of protein substrates subsequently hydrolyzed by HslV. HslU recognizes the N-terminal part of its protein substrates and unfolds these before they are guided to HslV for hydrolysis. The polypeptide is ATP-dependent protease ATPase subunit HslU (Serratia proteamaculans (strain 568)).